The sequence spans 46 residues: Aspartate aminotransferase 1 (46 aa).

Belongs to the class-I pyridoxal-phosphate-dependent aminotransferase family. As to quaternary structure, homodimer. Requires pyridoxal 5'-phosphate as cofactor.

It catalyses the reaction L-aspartate + 2-oxoglutarate = oxaloacetate + L-glutamate. Its function is as follows. Important for the metabolism of amino acids and Krebs-cycle related organic acids. In plants, it is involved in nitrogen metabolism and in aspects of carbon and energy metabolism. The polypeptide is Aspartate aminotransferase 1 (Pseudotsuga menziesii (Douglas-fir)).